A 297-amino-acid chain; its full sequence is Formamidopyrimidine-DNA glycosylase (297 aa).

Catalysis depends on Pro-2, which acts as the Schiff-base intermediate with DNA. Residue Glu-3 is the Proton donor of the active site. Catalysis depends on Lys-58, which acts as the Proton donor; for beta-elimination activity. The DNA site is built by His-106, Arg-133, and Arg-178. The FPG-type zinc finger occupies Phe-263–His-297. Arg-287 functions as the Proton donor; for delta-elimination activity in the catalytic mechanism.

It belongs to the FPG family. As to quaternary structure, monomer. The cofactor is Zn(2+).

The catalysed reaction is Hydrolysis of DNA containing ring-opened 7-methylguanine residues, releasing 2,6-diamino-4-hydroxy-5-(N-methyl)formamidopyrimidine.. It catalyses the reaction 2'-deoxyribonucleotide-(2'-deoxyribose 5'-phosphate)-2'-deoxyribonucleotide-DNA = a 3'-end 2'-deoxyribonucleotide-(2,3-dehydro-2,3-deoxyribose 5'-phosphate)-DNA + a 5'-end 5'-phospho-2'-deoxyribonucleoside-DNA + H(+). Functionally, involved in base excision repair of DNA damaged by oxidation or by mutagenic agents. Acts as a DNA glycosylase that recognizes and removes damaged bases. Has a preference for oxidized purines, such as 7,8-dihydro-8-oxoguanine (8-oxoG). Has AP (apurinic/apyrimidinic) lyase activity and introduces nicks in the DNA strand. Cleaves the DNA backbone by beta-delta elimination to generate a single-strand break at the site of the removed base with both 3'- and 5'-phosphates. The sequence is that of Formamidopyrimidine-DNA glycosylase from Cupriavidus metallidurans (strain ATCC 43123 / DSM 2839 / NBRC 102507 / CH34) (Ralstonia metallidurans).